A 758-amino-acid polypeptide reads, in one-letter code: 5-methyltetrahydropteroyltriglutamate--homocysteine methyltransferase (758 aa).

5-methyltetrahydropteroyltri-L-glutamate-binding positions include 16–19 (RELK) and Lys-112. L-homocysteine-binding positions include 433 to 435 (IGS) and Glu-486. L-methionine is bound by residues 433-435 (IGS) and Glu-486. 5-methyltetrahydropteroyltri-L-glutamate contacts are provided by residues 517 to 518 (RC) and Trp-563. Asp-601 contributes to the L-homocysteine binding site. L-methionine is bound at residue Asp-601. Glu-607 contacts 5-methyltetrahydropteroyltri-L-glutamate. The Zn(2+) site is built by His-643, Cys-645, and Glu-667. The active-site Proton donor is His-696. Residue Cys-728 coordinates Zn(2+).

Belongs to the vitamin-B12 independent methionine synthase family. Zn(2+) is required as a cofactor.

The catalysed reaction is 5-methyltetrahydropteroyltri-L-glutamate + L-homocysteine = tetrahydropteroyltri-L-glutamate + L-methionine. It participates in amino-acid biosynthesis; L-methionine biosynthesis via de novo pathway; L-methionine from L-homocysteine (MetE route): step 1/1. In terms of biological role, catalyzes the transfer of a methyl group from 5-methyltetrahydrofolate to homocysteine resulting in methionine formation. The sequence is that of 5-methyltetrahydropteroyltriglutamate--homocysteine methyltransferase from Neisseria meningitidis serogroup C / serotype 2a (strain ATCC 700532 / DSM 15464 / FAM18).